The primary structure comprises 335 residues: Deoxyhypusine hydroxylase (335 aa).

5 HEAT-like PBS-type repeats span residues 71-97 (LKHELAYCLGQTRNPASLPFLQQVAKD), 104-130 (CRHEAAEALGALGYEDSLEILKALRDN), 200-233 (LRYRAMFALRDLASPPDLPTATRAVEALAKGLKD), 238-264 (FRHEIAFVFGQLCHPASIPSLTEALSN), and 271-298 (VRHEAAEALGSLGDYEGVEETLRKFLND). Positions 73, 74, 106, and 107 each coordinate Fe cation. Residues His240, Glu241, His273, and Glu274 each contribute to the Fe cation site.

This sequence belongs to the deoxyhypusine hydroxylase family. Fe(2+) serves as cofactor.

It localises to the cytoplasm. The protein resides in the nucleus. The enzyme catalyses [eIF5A protein]-deoxyhypusine + AH2 + O2 = [eIF5A protein]-hypusine + A + H2O. The protein operates within protein modification; eIF5A hypusination. Its function is as follows. Catalyzes the hydroxylation of the N(6)-(4-aminobutyl)-L-lysine intermediate to form hypusine, an essential post-translational modification only found in mature eIF-5A factor. This Aspergillus fumigatus (strain ATCC MYA-4609 / CBS 101355 / FGSC A1100 / Af293) (Neosartorya fumigata) protein is Deoxyhypusine hydroxylase (lia1).